The sequence spans 397 residues: MLNNKRLFTSESVTEGHPDKIADQVSDAILDAILKDDPNARVACETTVTTGMALIAGEISTTTYVDIPKVVRETIKEIGYTRAKYGYDYETMAILTAIDEQSPDIAQGVDKALEYRDKDSEEEIEATGAGDQGLMFGYATNETETYMPLAIYLSHQLAKRLSDVRKDGTLNYLRPDGKVQVTVEYDENDNPVRIDTIVVSTQHAEDVTLEQIQEDIKAHVIYPTVPENLINEQTKFYINPTGRFVIGGPQGDAGLTGRKIIVDTYGGYARHGGGCFSGKDPTKVDRSAAYAARYVAKNIVAAGLADQCEVQLAYAIGVAEPVSIAIDTFGTGKVSEGQLVEAVRKHFDLRPAGIIKMLDLKQPIYKQTAAYGHFGRTDVLFPWEKLDKVEELKDAVK.

Residue histidine 17 participates in ATP binding. A Mg(2+)-binding site is contributed by aspartate 19. K(+) is bound at residue glutamate 45. Positions 58 and 101 each coordinate L-methionine. Positions 101 to 111 are flexible loop; it reads QSPDIAQGVDK. ATP-binding positions include 176 to 178, 243 to 244, aspartate 252, 258 to 259, and lysine 279; these read DGK, RF, and RK. Residue aspartate 252 coordinates L-methionine. An L-methionine-binding site is contributed by lysine 283.

Belongs to the AdoMet synthase family. Homotetramer; dimer of dimers. Requires Mg(2+) as cofactor. It depends on K(+) as a cofactor.

Its subcellular location is the cytoplasm. The enzyme catalyses L-methionine + ATP + H2O = S-adenosyl-L-methionine + phosphate + diphosphate. The protein operates within amino-acid biosynthesis; S-adenosyl-L-methionine biosynthesis; S-adenosyl-L-methionine from L-methionine: step 1/1. Its function is as follows. Catalyzes the formation of S-adenosylmethionine (AdoMet) from methionine and ATP. The overall synthetic reaction is composed of two sequential steps, AdoMet formation and the subsequent tripolyphosphate hydrolysis which occurs prior to release of AdoMet from the enzyme. The polypeptide is S-adenosylmethionine synthase (Staphylococcus aureus (strain USA300)).